The sequence spans 259 residues: uncharacterized protein (259 aa).

The 123-residue stretch at 51-173 (GKTHAKIVAN…IAVADGTDMT (123 aa)) folds into the HD domain.

This is an uncharacterized protein from Methanocaldococcus jannaschii (strain ATCC 43067 / DSM 2661 / JAL-1 / JCM 10045 / NBRC 100440) (Methanococcus jannaschii).